The following is a 275-amino-acid chain: Large ribosomal subunit protein uL2 (275 aa).

The interval 223–275 is disordered; it reads VAMNPVDHPHGGGEGRTSGGRHPVSPWGQPTKGYKTRSNKRTDKYIVRRRNKK.

It belongs to the universal ribosomal protein uL2 family. Part of the 50S ribosomal subunit. Forms a bridge to the 30S subunit in the 70S ribosome.

Functionally, one of the primary rRNA binding proteins. Required for association of the 30S and 50S subunits to form the 70S ribosome, for tRNA binding and peptide bond formation. It has been suggested to have peptidyltransferase activity; this is somewhat controversial. Makes several contacts with the 16S rRNA in the 70S ribosome. The polypeptide is Large ribosomal subunit protein uL2 (Shewanella pealeana (strain ATCC 700345 / ANG-SQ1)).